The primary structure comprises 305 residues: Protoheme IX farnesyltransferase (305 aa).

9 helical membrane-spanning segments follow: residues 31–51 (VMSL…YSVH), 52–72 (PFIA…AGAI), 102–119 (ALSF…FMAL), 123–145 (LLAS…IWLK), 151–171 (NIVI…AAVS), 179–199 (IILF…LALF), 218–238 (ILYT…VSLM), 240–260 (FFIG…GLVF), and 281–301 (FAYS…TSTI).

Belongs to the UbiA prenyltransferase family. Protoheme IX farnesyltransferase subfamily.

The protein localises to the cell inner membrane. The enzyme catalyses heme b + (2E,6E)-farnesyl diphosphate + H2O = Fe(II)-heme o + diphosphate. It functions in the pathway porphyrin-containing compound metabolism; heme O biosynthesis; heme O from protoheme: step 1/1. Functionally, converts heme B (protoheme IX) to heme O by substitution of the vinyl group on carbon 2 of heme B porphyrin ring with a hydroxyethyl farnesyl side group. The chain is Protoheme IX farnesyltransferase from Rickettsia akari (strain Hartford).